Consider the following 180-residue polypeptide: Shikimate kinase (180 aa).

Glycine 14–threonine 19 provides a ligand contact to ATP. Position 18 (serine 18) interacts with Mg(2+). The substrate site is built by aspartate 36, arginine 60, and glycine 82. Arginine 120 provides a ligand contact to ATP. Arginine 140 lines the substrate pocket. Glutamine 157 contributes to the ATP binding site.

The protein belongs to the shikimate kinase family. As to quaternary structure, monomer. Mg(2+) serves as cofactor.

Its subcellular location is the cytoplasm. The enzyme catalyses shikimate + ATP = 3-phosphoshikimate + ADP + H(+). The protein operates within metabolic intermediate biosynthesis; chorismate biosynthesis; chorismate from D-erythrose 4-phosphate and phosphoenolpyruvate: step 5/7. Catalyzes the specific phosphorylation of the 3-hydroxyl group of shikimic acid using ATP as a cosubstrate. This Haemophilus influenzae (strain PittGG) protein is Shikimate kinase.